Reading from the N-terminus, the 307-residue chain is Agmatinase (307 aa).

Positions 128, 151, 153, 155, 232, and 234 each coordinate Mn(2+).

Belongs to the arginase family. Agmatinase subfamily. Requires Mn(2+) as cofactor.

It carries out the reaction agmatine + H2O = urea + putrescine. It functions in the pathway amine and polyamine biosynthesis; putrescine biosynthesis via agmatine pathway; putrescine from agmatine: step 1/1. Catalyzes the formation of putrescine from agmatine. The polypeptide is Agmatinase (Neisseria meningitidis serogroup C (strain 053442)).